The chain runs to 286 residues: Pyridoxal kinase PdxY (286 aa).

Substrate contacts are provided by residues Ser-9 and 44 to 45 (TQ). ATP contacts are provided by residues Asp-111, Ala-143, Glu-148, Lys-181, and 208–211 (RPLV). Asp-223 is a binding site for substrate.

This sequence belongs to the pyridoxine kinase family. PdxY subfamily. As to quaternary structure, homodimer. Mg(2+) serves as cofactor.

It catalyses the reaction pyridoxal + ATP = pyridoxal 5'-phosphate + ADP + H(+). It functions in the pathway cofactor metabolism; pyridoxal 5'-phosphate salvage; pyridoxal 5'-phosphate from pyridoxal: step 1/1. Its function is as follows. Pyridoxal kinase involved in the salvage pathway of pyridoxal 5'-phosphate (PLP). Catalyzes the phosphorylation of pyridoxal to PLP. This is Pyridoxal kinase PdxY from Salmonella paratyphi A (strain ATCC 9150 / SARB42).